The sequence spans 75 residues: RNA-binding protein KhpA (75 aa).

Residues 29-75 (KVVYHLTVHPDDVGKVIGKNGRIAKAIRTVVYASKTDGNKRIYLDIM) form the KH domain.

The protein belongs to the KhpA RNA-binding protein family. As to quaternary structure, forms a complex with KhpB.

Its subcellular location is the cytoplasm. Its function is as follows. A probable RNA chaperone. Forms a complex with KhpB which binds to cellular RNA and controls its expression. Plays a role in peptidoglycan (PG) homeostasis and cell length regulation. The chain is RNA-binding protein KhpA from Oceanobacillus iheyensis (strain DSM 14371 / CIP 107618 / JCM 11309 / KCTC 3954 / HTE831).